A 475-amino-acid chain; its full sequence is Ubiquitin carboxyl-terminal hydrolase calypso (475 aa).

The UCH catalytic domain maps to 44-275 (GWLELESDPG…IRFNLMAVVP (232 aa)). Catalysis depends on cysteine 130, which acts as the Nucleophile. Histidine 212 acts as the Proton donor in catalysis. Residues 333–360 (AKDLQLLLKNLDTEIAINEQNLADENDR) adopt a coiled-coil conformation. A ULD domain is found at 374 to 402 (NYDKFICTFLSMLAHQGVLGELVSQHLLP). Residues 404–475 (KKVSGQSAAN…KGRNKCRKRK (72 aa)) form a positively charged C-terminal tail required for binding nucleosomes region. A disordered region spans residues 411–475 (AANRISKQNS…KGRNKCRKRK (65 aa)). Over residues 419 to 460 (NSAASSAGANAGAAAGVTPKSQQQQQQPQTAASKNGKSPGKT) the composition is skewed to low complexity. Positions 461 to 475 (PGRRRKGRNKCRKRK) are enriched in basic residues.

It belongs to the peptidase C12 family. BAP1 subfamily. In terms of assembly, catalytic component of the polycomb repressive deubiquitinase (PR-DUB) complex, at least composed of caly/calypso, Asx and sba (MBD5/6 homolog). The PR-DUB complex associates with nucleosomes to mediate deubiquitination of histone H2AK118ub1 substrates; the association requires the positively charged C-terminal tail of caly, probably due to direct binding of DNA. Interacts (via ULD domain) with Asx (via DEUBAD domain); the interaction produces a stable heterodimer with a composite binding site for ubiquitin. Homodimerizes (via coiled-coil hinge-region between the UCH and ULD domains) to mediate assembly of 2 copies of the caly-Asx heterodimer into a bisymmetric tetramer; dimerization enhances PR-DUB association with nucleosomes.

The protein localises to the nucleus. The enzyme catalyses Thiol-dependent hydrolysis of ester, thioester, amide, peptide and isopeptide bonds formed by the C-terminal Gly of ubiquitin (a 76-residue protein attached to proteins as an intracellular targeting signal).. Its function is as follows. Catalytic component of the polycomb repressive deubiquitinase (PR-DUB) complex, a complex that specifically mediates deubiquitination of histone H2A monoubiquitinated at 'Lys-119' (H2AK118ub1). Mediates bisymmetric organization of the PR-DUB complex and is involved in association with nucleosomes to mediate deubiquitination. Does not deubiquitinate monoubiquitinated histone H2B. Required to maintain the transcriptionally repressive state of homeotic genes throughout development. The PR-DUB complex has weak or no activity toward 'Lys-48'- and 'Lys-63'-linked polyubiquitin chains. Polycomb group (PcG) protein. The polypeptide is Ubiquitin carboxyl-terminal hydrolase calypso (Drosophila persimilis (Fruit fly)).